The primary structure comprises 354 residues: MRTVHDDELKKILKIMSPGTSLREGLDNILRAKTGGLIVLGDNEEILDLVDGGFNINSEYSPAYIYELAKMDGALVLTSDRKRILYANAQLMPNQSISTFETGTRHRTAQRVAKQTNKIAIAISQRRNIITVYKGDIKYVLRDSAVILSKANQAIQTLEKYVAVLERVTNNLNILEFQDLATLFDVTTAIQRTEMVMRIVEEIEGYIIELGNEGRLISMQLNELVRSIEQDGVLLIRDYCYDKMEYNDVYKEIQELSAEDLLDLDIIAKELGYVGKSLIDTLVSPRGYRISSKIPRIPSNVIENLVGHFGKLKYILEAGNEELDQVEGIGEARARAIKNGLRRIREQVALNKNL.

Residues 6–144 enclose the DAC domain; it reads DDELKKILKI…GDIKYVLRDS (139 aa). Residues Gly-73, Leu-91, and 104–108 contribute to the ATP site; that span reads TRHRT.

Belongs to the DisA family. As to quaternary structure, homooctamer. The cofactor is Mg(2+).

It carries out the reaction 2 ATP = 3',3'-c-di-AMP + 2 diphosphate. In terms of biological role, participates in a DNA-damage check-point that is active prior to asymmetric division when DNA is damaged. DisA forms globular foci that rapidly scan along the chromosomes during sporulation, searching for lesions. When a lesion is present, DisA pauses at the lesion site. This triggers a cellular response that culminates in a temporary block in sporulation initiation. Functionally, also has diadenylate cyclase activity, catalyzing the condensation of 2 ATP molecules into cyclic di-AMP (c-di-AMP). c-di-AMP acts as a signaling molecule that couples DNA integrity with progression of sporulation. The rise in c-di-AMP level generated by DisA while scanning the chromosome, operates as a positive signal that advances sporulation; upon encountering a lesion, the DisA focus arrests at the damaged site and halts c-di-AMP synthesis. In Clostridium perfringens (strain SM101 / Type A), this protein is DNA integrity scanning protein DisA.